Here is a 439-residue protein sequence, read N- to C-terminus: Histidinol dehydrogenase (439 aa).

Residues Tyr129, Gln193, and Asn222 each coordinate NAD(+). Residues Thr245, Gln267, and His270 each contribute to the substrate site. Zn(2+)-binding residues include Gln267 and His270. Catalysis depends on proton acceptor residues Glu336 and His337. 4 residues coordinate substrate: His337, Asp370, Glu424, and His429. Residue Asp370 coordinates Zn(2+). His429 contributes to the Zn(2+) binding site.

It belongs to the histidinol dehydrogenase family. Zn(2+) serves as cofactor.

It catalyses the reaction L-histidinol + 2 NAD(+) + H2O = L-histidine + 2 NADH + 3 H(+). It participates in amino-acid biosynthesis; L-histidine biosynthesis; L-histidine from 5-phospho-alpha-D-ribose 1-diphosphate: step 9/9. Catalyzes the sequential NAD-dependent oxidations of L-histidinol to L-histidinaldehyde and then to L-histidine. The chain is Histidinol dehydrogenase from Cutibacterium acnes (strain DSM 16379 / KPA171202) (Propionibacterium acnes).